Reading from the N-terminus, the 494-residue chain is ARS-binding factor 1 (494 aa).

Disordered regions lie at residues 82–130 and 273–328; these read NSGS…EDDD and LTGG…HVDS. The span at 119–130 shows a compositional bias: acidic residues; the sequence is RAEDEDDDEDDD. Positions 281–295 are enriched in basic residues; the sequence is VQHHHHPSIPAHHQH. A compositionally biased stretch (basic and acidic residues) spans 319 to 328; it reads QEQHQSHVDS. Ser400 is modified (phosphoserine; by PKC). A disordered region spans residues 467 to 494; sequence EAEENVSDNNLKKDDIPDENIQPELRGQ.

It belongs to the ABF1 family. Extensively phosphorylated on Ser and Thr residues.

It localises to the nucleus. General regulatory factor (GRF) that contributes to transcriptional activation of a large number of genes, as well as to DNA replication, silencing and telomere structure. Involved in the transcription activation of a subset of ribosomal protein genes. Binds the ARS-elements found in many promoters. Binds to the sequence 5'-TCN(7)ACG-3'. This Kluyveromyces lactis (strain ATCC 8585 / CBS 2359 / DSM 70799 / NBRC 1267 / NRRL Y-1140 / WM37) (Yeast) protein is ARS-binding factor 1 (ABF1).